A 326-amino-acid chain; its full sequence is tRNA-modifying protein YgfZ (326 aa).

Tryptophan 27 and tryptophan 189 together coordinate folate.

This sequence belongs to the tRNA-modifying YgfZ family.

It localises to the cytoplasm. In terms of biological role, folate-binding protein involved in regulating the level of ATP-DnaA and in the modification of some tRNAs. It is probably a key factor in regulatory networks that act via tRNA modification, such as initiation of chromosomal replication. This chain is tRNA-modifying protein YgfZ, found in Escherichia coli O157:H7 (strain EC4115 / EHEC).